A 560-amino-acid polypeptide reads, in one-letter code: DNA ligase B (560 aa).

Catalysis depends on lysine 124, which acts as the N6-AMP-lysine intermediate.

It belongs to the NAD-dependent DNA ligase family. LigB subfamily.

It carries out the reaction NAD(+) + (deoxyribonucleotide)n-3'-hydroxyl + 5'-phospho-(deoxyribonucleotide)m = (deoxyribonucleotide)n+m + AMP + beta-nicotinamide D-nucleotide.. Catalyzes the formation of phosphodiester linkages between 5'-phosphoryl and 3'-hydroxyl groups in double-stranded DNA using NAD as a coenzyme and as the energy source for the reaction. In Escherichia coli O157:H7, this protein is DNA ligase B.